Here is a 278-residue protein sequence, read N- to C-terminus: MGTNDALTSTEDAVTAGANDAPLPAPPEPPRKARRATSRTSDFRVAEQPAFVLHSYPYRETSLIVDVLTRDHGRLALVAKGAKRPHSALRGVLQTFQPLLLSWSGKSEVRTLTGAEWVGGMLPLGGDGLLCGFYANELLVKFCAREDPQPPLFNHYVLTLTRLAHGEPAVQVLRSFERVLLRETGYAMALNRTVARRAVEPERRYVFDPERGVRNADDDVPSHWPVITGQTLLDMEQDDYHRAQTVAQSKTLMRFLLNTYLGGTPLATRQILIDLQNL.

Residues 1-12 show a composition bias toward polar residues; the sequence is MGTNDALTSTED. A disordered region spans residues 1 to 41; the sequence is MGTNDALTSTEDAVTAGANDAPLPAPPEPPRKARRATSRTS.

Belongs to the RecO family.

Involved in DNA repair and RecF pathway recombination. The sequence is that of DNA repair protein RecO from Burkholderia orbicola (strain AU 1054).